Reading from the N-terminus, the 68-residue chain is Small ribosomal subunit protein bS21 (68 aa).

Basic and acidic residues predominate over residues 37–49 (EKPSEKRAREKAA). A disordered region spans residues 37–68 (EKPSEKRAREKAAAVRRARKMERKRMERDGIK). The span at 50 to 59 (AVRRARKMER) shows a compositional bias: basic residues.

This sequence belongs to the bacterial ribosomal protein bS21 family.

This chain is Small ribosomal subunit protein bS21, found in Erythrobacter litoralis (strain HTCC2594).